A 450-amino-acid chain; its full sequence is UDP-N-acetylmuramoylalanine--D-glutamate ligase (450 aa).

Position 119–125 (119–125 (GSNGKTT)) interacts with ATP.

This sequence belongs to the MurCDEF family.

The protein localises to the cytoplasm. The catalysed reaction is UDP-N-acetyl-alpha-D-muramoyl-L-alanine + D-glutamate + ATP = UDP-N-acetyl-alpha-D-muramoyl-L-alanyl-D-glutamate + ADP + phosphate + H(+). It participates in cell wall biogenesis; peptidoglycan biosynthesis. Cell wall formation. Catalyzes the addition of glutamate to the nucleotide precursor UDP-N-acetylmuramoyl-L-alanine (UMA). The chain is UDP-N-acetylmuramoylalanine--D-glutamate ligase from Streptococcus gordonii (strain Challis / ATCC 35105 / BCRC 15272 / CH1 / DL1 / V288).